The sequence spans 210 residues: V-type sodium ATPase subunit D (210 aa).

The protein belongs to the V-ATPase D subunit family.

Its function is as follows. Involved in ATP-driven sodium extrusion. The protein is V-type sodium ATPase subunit D (ntpD) of Enterococcus hirae (strain ATCC 9790 / DSM 20160 / JCM 8729 / LMG 6399 / NBRC 3181 / NCIMB 6459 / NCDO 1258 / NCTC 12367 / WDCM 00089 / R).